A 165-amino-acid polypeptide reads, in one-letter code: Methylated-DNA--protein-cysteine methyltransferase (165 aa).

Cys126 serves as the catalytic Nucleophile; methyl group acceptor.

The protein belongs to the MGMT family.

It localises to the cytoplasm. It carries out the reaction a 6-O-methyl-2'-deoxyguanosine in DNA + L-cysteinyl-[protein] = S-methyl-L-cysteinyl-[protein] + a 2'-deoxyguanosine in DNA. The catalysed reaction is a 4-O-methyl-thymidine in DNA + L-cysteinyl-[protein] = a thymidine in DNA + S-methyl-L-cysteinyl-[protein]. Functionally, involved in the cellular defense against the biological effects of O6-methylguanine (O6-MeG) and O4-methylthymine (O4-MeT) in DNA. Repairs the methylated nucleobase in DNA by stoichiometrically transferring the methyl group to a cysteine residue in the enzyme. This is a suicide reaction: the enzyme is irreversibly inactivated. This Mycobacterium leprae (strain TN) protein is Methylated-DNA--protein-cysteine methyltransferase.